The primary structure comprises 231 residues: High-affinity zinc uptake system ATP-binding protein ZnuC (231 aa).

The ABC transporter domain occupies Val-4–Leu-230.

This sequence belongs to the ABC transporter superfamily. As to quaternary structure, the complex is composed of two ATP-binding proteins (ZnuC), two transmembrane proteins (ZnuB) and a solute-binding protein (ZnuA).

The protein localises to the cell membrane. It catalyses the reaction Zn(2+)(out) + ATP(in) + H2O(in) = Zn(2+)(in) + ADP(in) + phosphate(in) + H(+)(in). Its function is as follows. Part of the high-affinity ABC transporter complex ZnuABC involved in zinc import. Responsible for energy coupling to the transport system. ZnuABC-mediated zinc transport is required for comF expression and competence development. The sequence is that of High-affinity zinc uptake system ATP-binding protein ZnuC (znuC) from Bacillus subtilis (strain 168).